Reading from the N-terminus, the 400-residue chain is Tryptophan synthase beta chain (400 aa).

At lysine 91 the chain carries N6-(pyridoxal phosphate)lysine.

Belongs to the TrpB family. In terms of assembly, tetramer of two alpha and two beta chains. Requires pyridoxal 5'-phosphate as cofactor.

The enzyme catalyses (1S,2R)-1-C-(indol-3-yl)glycerol 3-phosphate + L-serine = D-glyceraldehyde 3-phosphate + L-tryptophan + H2O. It participates in amino-acid biosynthesis; L-tryptophan biosynthesis; L-tryptophan from chorismate: step 5/5. In terms of biological role, the beta subunit is responsible for the synthesis of L-tryptophan from indole and L-serine. The sequence is that of Tryptophan synthase beta chain from Listeria monocytogenes serotype 4b (strain CLIP80459).